The sequence spans 553 residues: Putative transport protein AHA_3492 (553 aa).

5 consecutive transmembrane segments (helical) span residues 4–24 (IALS…LGNW), 29–49 (VGLG…FAGL), 65–85 (FGLI…FFSS), 95–115 (GFAA…HQLF), and 158–178 (MGYA…MWLI). RCK C-terminal domains are found at residues 191–276 (AQFE…VLGE) and 279–361 (ETSL…VVGN). 6 helical membrane-spanning segments follow: residues 371–391 (MLPV…PFYL), 403–425 (AGGP…LYWF), 439–459 (IVLF…DTLI), 465–485 (AWMM…GVLA), 493–513 (YLTL…LAFA), and 533–553 (LVMF…WAGA).

It belongs to the AAE transporter (TC 2.A.81) family. YidE subfamily.

The protein resides in the cell membrane. The protein is Putative transport protein AHA_3492 of Aeromonas hydrophila subsp. hydrophila (strain ATCC 7966 / DSM 30187 / BCRC 13018 / CCUG 14551 / JCM 1027 / KCTC 2358 / NCIMB 9240 / NCTC 8049).